Here is a 102-residue protein sequence, read N- to C-terminus: Caroteno-chlorophyll a-c-binding protein (102 aa).

E36 and H39 together coordinate chlorophyll a. Residues 78-98 (VLGLIKIVPAGLWGIMIFYAA) traverse the membrane as a helical segment.

This sequence belongs to the light-harvesting chlorophyll a/b-binding (LHC) protein family. In terms of assembly, the LHC complex consists of chlorophyll a-b binding proteins. The cofactor is Binds at least 14 chlorophylls (8 Chl-a and 6 Chl-b) and carotenoids such as lutein and neoxanthin.. Photoregulated by reversible phosphorylation of its threonine residues.

It is found in the plastid. The protein localises to the chloroplast thylakoid membrane. Functionally, the light-harvesting complex (LHC) functions as a light receptor, it captures and delivers excitation energy to photosystems with which it is closely associated. This chain is Caroteno-chlorophyll a-c-binding protein, found in Amphidinium carterae (Dinoflagellate).